The sequence spans 207 residues: Peptidyl-tRNA hydrolase (207 aa).

Residue tyrosine 15 participates in tRNA binding. The active-site Proton acceptor is histidine 20. TRNA contacts are provided by phenylalanine 66, asparagine 68, and asparagine 114. The interval 187–207 (HTTKPPRPKPARPATAESDKG) is disordered. Positions 198 to 207 (RPATAESDKG) are enriched in low complexity.

The protein belongs to the PTH family. Monomer.

The protein resides in the cytoplasm. It catalyses the reaction an N-acyl-L-alpha-aminoacyl-tRNA + H2O = an N-acyl-L-amino acid + a tRNA + H(+). Functionally, hydrolyzes ribosome-free peptidyl-tRNAs (with 1 or more amino acids incorporated), which drop off the ribosome during protein synthesis, or as a result of ribosome stalling. Its function is as follows. Catalyzes the release of premature peptidyl moieties from peptidyl-tRNA molecules trapped in stalled 50S ribosomal subunits, and thus maintains levels of free tRNAs and 50S ribosomes. This chain is Peptidyl-tRNA hydrolase, found in Delftia acidovorans (strain DSM 14801 / SPH-1).